The sequence spans 385 residues: 4-hydroxy-3-methylbut-2-en-1-yl diphosphate synthase (flavodoxin) 2 (385 aa).

[4Fe-4S] cluster is bound by residues cysteine 280, cysteine 283, cysteine 315, and glutamate 322.

The protein belongs to the IspG family. It depends on [4Fe-4S] cluster as a cofactor.

The enzyme catalyses (2E)-4-hydroxy-3-methylbut-2-enyl diphosphate + oxidized [flavodoxin] + H2O + 2 H(+) = 2-C-methyl-D-erythritol 2,4-cyclic diphosphate + reduced [flavodoxin]. It functions in the pathway isoprenoid biosynthesis; isopentenyl diphosphate biosynthesis via DXP pathway; isopentenyl diphosphate from 1-deoxy-D-xylulose 5-phosphate: step 5/6. Functionally, converts 2C-methyl-D-erythritol 2,4-cyclodiphosphate (ME-2,4cPP) into 1-hydroxy-2-methyl-2-(E)-butenyl 4-diphosphate. The polypeptide is 4-hydroxy-3-methylbut-2-en-1-yl diphosphate synthase (flavodoxin) 2 (Streptomyces coelicolor (strain ATCC BAA-471 / A3(2) / M145)).